The primary structure comprises 219 residues: uncharacterized protein (219 aa).

Transmembrane regions (helical) follow at residues 81–101 (VVKW…NYLI) and 168–188 (PIME…TALV).

It is found in the membrane. This is an uncharacterized protein from Saccharomyces cerevisiae (strain ATCC 204508 / S288c) (Baker's yeast).